Consider the following 281-residue polypeptide: Acetyl-coenzyme A carboxylase carboxyl transferase subunit beta (281 aa).

Positions 23–281 (IWTKCGSCQA…SLLVKLHYKN (259 aa)) constitute a CoA carboxyltransferase N-terminal domain. Zn(2+)-binding residues include Cys27, Cys30, Cys46, and Cys49. A C4-type zinc finger spans residues 27 to 49 (CGSCQAVLYKSELEKLQEVCPKC).

The protein belongs to the AccD/PCCB family. Acetyl-CoA carboxylase is a heterohexamer composed of biotin carboxyl carrier protein (AccB), biotin carboxylase (AccC) and two subunits each of ACCase subunit alpha (AccA) and ACCase subunit beta (AccD). Zn(2+) serves as cofactor.

Its subcellular location is the cytoplasm. It carries out the reaction N(6)-carboxybiotinyl-L-lysyl-[protein] + acetyl-CoA = N(6)-biotinyl-L-lysyl-[protein] + malonyl-CoA. Its pathway is lipid metabolism; malonyl-CoA biosynthesis; malonyl-CoA from acetyl-CoA: step 1/1. Its function is as follows. Component of the acetyl coenzyme A carboxylase (ACC) complex. Biotin carboxylase (BC) catalyzes the carboxylation of biotin on its carrier protein (BCCP) and then the CO(2) group is transferred by the transcarboxylase to acetyl-CoA to form malonyl-CoA. This is Acetyl-coenzyme A carboxylase carboxyl transferase subunit beta from Alteromonas mediterranea (strain DSM 17117 / CIP 110805 / LMG 28347 / Deep ecotype).